The primary structure comprises 321 residues: MAVYTDVSDGALRAFLSLYDIGDLTAYRGIAEGVENSNFVLRTTGGDFILTLYERRVDPADLPWFLGLMGCLSDHGLSCPRPVVARDGQALRTLAGRPAAITTFLPGVWPREVRVAHCAPVGAALAALHMAGQGFGAERANALGPDAWPGLVAACRADGDSVQPGLMAELDAALAEILPAWPARDDLPRGQIHADLFPDNVFFLDGAVSGIIDFYFACTDLLAYDIAICLNAWCFDADGTFDAARGRALIAGYESVRPLTDAERRALPVLAAGAATRFLLTRLYDWVNTPAGAMVTRKDPLDYLKRLRFHRAARNMASYGL.

The protein belongs to the pseudomonas-type ThrB family.

It carries out the reaction L-homoserine + ATP = O-phospho-L-homoserine + ADP + H(+). Its pathway is amino-acid biosynthesis; L-threonine biosynthesis; L-threonine from L-aspartate: step 4/5. The protein is Homoserine kinase of Gluconacetobacter diazotrophicus (strain ATCC 49037 / DSM 5601 / CCUG 37298 / CIP 103539 / LMG 7603 / PAl5).